The chain runs to 29 residues: M-poneritoxin-Ng3d (29 aa).

In terms of tissue distribution, expressed by the venom gland.

Its subcellular location is the secreted. In terms of biological role, has activity against some Gram-positive bacteria and S.cerevisiae. Has a non-hemolytic activity. The polypeptide is M-poneritoxin-Ng3d (Neoponera goeldii (Ponerine ant)).